Here is a 140-residue protein sequence, read N- to C-terminus: 6,7-dimethyl-8-ribityllumazine synthase (140 aa).

Residues Phe11, 43-45 (SFD), and 67-69 (CVI) each bind 5-amino-6-(D-ribitylamino)uracil. 72–73 (DT) lines the (2S)-2-hydroxy-3-oxobutyl phosphate pocket. The Proton donor role is filled by His75. Leu100 serves as a coordination point for 5-amino-6-(D-ribitylamino)uracil. Arg115 is a (2S)-2-hydroxy-3-oxobutyl phosphate binding site.

It belongs to the DMRL synthase family. Forms an icosahedral capsid composed of 60 subunits, arranged as a dodecamer of pentamers.

The catalysed reaction is (2S)-2-hydroxy-3-oxobutyl phosphate + 5-amino-6-(D-ribitylamino)uracil = 6,7-dimethyl-8-(1-D-ribityl)lumazine + phosphate + 2 H2O + H(+). The protein operates within cofactor biosynthesis; riboflavin biosynthesis; riboflavin from 2-hydroxy-3-oxobutyl phosphate and 5-amino-6-(D-ribitylamino)uracil: step 1/2. Its function is as follows. Catalyzes the formation of 6,7-dimethyl-8-ribityllumazine by condensation of 5-amino-6-(D-ribitylamino)uracil with 3,4-dihydroxy-2-butanone 4-phosphate. This is the penultimate step in the biosynthesis of riboflavin. The sequence is that of 6,7-dimethyl-8-ribityllumazine synthase from Methanococcus vannielii (strain ATCC 35089 / DSM 1224 / JCM 13029 / OCM 148 / SB).